We begin with the raw amino-acid sequence, 372 residues long: Tyrosine--tRNA ligase 1 (372 aa).

Positions 37, 169, 173, 176, and 191 each coordinate L-tyrosine. Positions 246 to 250 (KMSKS) match the 'KMSKS' region motif. Lysine 249 contributes to the ATP binding site.

The protein belongs to the class-I aminoacyl-tRNA synthetase family. TyrS type 4 subfamily. Homodimer.

The protein resides in the cytoplasm. It carries out the reaction tRNA(Tyr) + L-tyrosine + ATP = L-tyrosyl-tRNA(Tyr) + AMP + diphosphate + H(+). Functionally, catalyzes the attachment of tyrosine to tRNA(Tyr) in a two-step reaction: tyrosine is first activated by ATP to form Tyr-AMP and then transferred to the acceptor end of tRNA(Tyr). The protein is Tyrosine--tRNA ligase 1 of Pyrobaculum aerophilum (strain ATCC 51768 / DSM 7523 / JCM 9630 / CIP 104966 / NBRC 100827 / IM2).